We begin with the raw amino-acid sequence, 393 residues long: Aspartate aminotransferase (393 aa).

Residues Gly-38, Trp-124, and Asn-174 each contribute to the L-aspartate site. Position 237 is an N6-(pyridoxal phosphate)lysine (Lys-237).

This sequence belongs to the class-I pyridoxal-phosphate-dependent aminotransferase family. In terms of assembly, homodimer. Requires pyridoxal 5'-phosphate as cofactor.

The protein localises to the cytoplasm. It catalyses the reaction L-aspartate + 2-oxoglutarate = oxaloacetate + L-glutamate. The protein is Aspartate aminotransferase (aspB) of Bacillus subtilis (strain 168).